We begin with the raw amino-acid sequence, 402 residues long: NADH-quinone oxidoreductase subunit D (402 aa).

This sequence belongs to the complex I 49 kDa subunit family. In terms of assembly, NDH-1 is composed of 14 different subunits. Subunits NuoB, C, D, E, F, and G constitute the peripheral sector of the complex.

The protein localises to the cell inner membrane. It catalyses the reaction a quinone + NADH + 5 H(+)(in) = a quinol + NAD(+) + 4 H(+)(out). NDH-1 shuttles electrons from NADH, via FMN and iron-sulfur (Fe-S) centers, to quinones in the respiratory chain. The immediate electron acceptor for the enzyme in this species is believed to be ubiquinone. Couples the redox reaction to proton translocation (for every two electrons transferred, four hydrogen ions are translocated across the cytoplasmic membrane), and thus conserves the redox energy in a proton gradient. The sequence is that of NADH-quinone oxidoreductase subunit D from Rhodopseudomonas palustris (strain ATCC BAA-98 / CGA009).